Consider the following 421-residue polypeptide: MPEGRHVAIIGAGAVGVISAIEALREGHRVTLIDPGEPGGEQAASYGNAGWLSSHSVIPPAEPGIWKKVPGYLMDPLGPLAIRWSYLPKALPWLIKYLLSGWTEARVEKTAFALRDLLKDAPLLHRKLAEEAGVPELIERNGVMHAFPSRGNFDNDLGWRLRKKVGVAWLELNADEMRQREPDLHPRYSFGVVVEEAGRCRDPGAYVAALANHALASGAKLVRAKATGLKLSGNKLVAVVTETGEIACDAAVVAAGARSKQLTASVGDPLPLETERGYHVMIENPETGPRSSIMASDAKMVVNWTNKGLRAAGTVEIAGLEAAPNWKRAEILRDHLFSMFPKLPRDIPASRIKTWFGHRPSMPDGLPCIGHARASRDIVYAFGHGHVGLVGSARTGRLVAQLLSGKQPEIPLAPFSPTRFL.

FAD-binding residues include Ala12, Gly13, Ala14, Val15, Gly47, Gly64, Ile65, Lys225, Ala226, Arg359, Gly385, Gly388, and Leu389. Arg359 serves as a coordination point for D-proline. Residue Arg359 participates in D-serine binding.

The protein belongs to the DAMOX/DASOX family. FAD serves as cofactor.

It localises to the cytoplasm. It is found in the secreted. Its subcellular location is the cell wall. It catalyses the reaction a D-alpha-amino acid + O2 + H2O = a 2-oxocarboxylate + H2O2 + NH4(+). Its function is as follows. Catalyzes the oxidative deamination of D-amino acids with broad substrate specificity. In Bradyrhizobium diazoefficiens (strain JCM 10833 / BCRC 13528 / IAM 13628 / NBRC 14792 / USDA 110), this protein is D-amino-acid oxidase.